Reading from the N-terminus, the 1172-residue chain is Tudor domain-containing protein 1 (1172 aa).

Disordered stretches follow at residues 1–59 (MMPR…KNNF) and 72–136 (QEDS…KKSH). Low complexity-rich tracts occupy residues 75 to 86 (SSVVSSNPAVVN) and 103 to 117 (NPVS…SPPN). The segment covering 118–129 (QVKTKPSSNVTP) has biased composition (polar residues). Zn(2+) is bound by residues C163, C166, C174, C177, C183, C187, H195, and C199. Residues 163–199 (CHRCGLFGSLRCSQCKQTYYCSTACQRRDWSSHSTIC) form an MYND-type zinc finger. Tudor domains lie at 307–367 (LPVK…LDLF), 536–595 (YPTI…LLDL), 756–815 (KAEI…FLLL), and 982–1040 (RPRT…HLEL).

This sequence belongs to the TDRD1 family. Found in a mRNP complex, at least composed of TDRD1, TDRD6, TDRD7 and DDX4. Interacts with MAEL. Interacts with PIWIL1, PIWIL2 and PIWIL4 (when methylated on arginine residues). Interacts with TDRD12. Testis and ovary specific. Present in germ-line cells and is most abundant in fetal prospermatogonia and postnatal primary spermatocytes (at protein level).

It localises to the cytoplasm. Its function is as follows. Plays a central role during spermatogenesis by participating in the repression transposable elements and preventing their mobilization, which is essential for the germline integrity. Acts via the piRNA metabolic process, which mediates the repression of transposable elements during meiosis by forming complexes composed of piRNAs and Piwi proteins and governs the methylation and subsequent repression of transposons. Required for the localization of Piwi proteins to the meiotic nuage. Involved in the piRNA metabolic process by ensuring the entry of correct transcripts into the normal piRNA pool and limiting the entry of cellular transcripts into the piRNA pathway. May act by allowing the recruitment of piRNA biogenesis or loading factors that ensure the correct entry of transcripts and piRNAs into Piwi proteins. The polypeptide is Tudor domain-containing protein 1 (Tdrd1) (Mus musculus (Mouse)).